Reading from the N-terminus, the 387-residue chain is Phosphoglycerate kinase (387 aa).

Residues 21 to 23 (DLN), Arg-36, 59 to 62 (HLGR), Arg-113, and Arg-146 contribute to the substrate site. ATP contacts are provided by residues Lys-197, Glu-314, and 340 to 343 (GGDT).

It belongs to the phosphoglycerate kinase family. In terms of assembly, monomer.

The protein resides in the cytoplasm. The enzyme catalyses (2R)-3-phosphoglycerate + ATP = (2R)-3-phospho-glyceroyl phosphate + ADP. It participates in carbohydrate degradation; glycolysis; pyruvate from D-glyceraldehyde 3-phosphate: step 2/5. The protein is Phosphoglycerate kinase of Pseudomonas syringae pv. tomato (strain ATCC BAA-871 / DC3000).